The chain runs to 280 residues: DegV domain-containing protein spyM18_1709 (280 aa).

The 278-residue stretch at 3-280 folds into the DegV domain; the sequence is WKIVTDSGCD…DGGLLMGYEI (278 aa). 2 residues coordinate hexadecanoate: Ser63 and Ser91.

Functionally, may bind long-chain fatty acids, such as palmitate, and may play a role in lipid transport or fatty acid metabolism. The protein is DegV domain-containing protein spyM18_1709 of Streptococcus pyogenes serotype M18 (strain MGAS8232).